The chain runs to 264 residues: MAISIKTSEDIEKMRVAGRLAAEVLEMIEPYIKPGVTTGELDRICNDYIVNEQHAISACLGYHGYPKSVCISINEVVCHGIPDDAKHLKDGDIVNIDVTVIKDEFHGDTSKMFIVGKPTILGERLCRVTQESLYLGIKMVKPGIRLRTIGAAIQKYAEGEGFSVVREYCGHGIGRGFHEEPQVLHYDADDGGVVLQPGMTFTIEPMLNAGDYRIRTMKDGWTVKTKDRSLSAQYEHTIVVTENGCEILTLRKDDTIPAIITHDE.

Residue histidine 79 coordinates substrate. A divalent metal cation is bound by residues aspartate 97, aspartate 108, and histidine 171. Histidine 178 is a substrate binding site. 2 residues coordinate a divalent metal cation: glutamate 204 and glutamate 235.

It belongs to the peptidase M24A family. Methionine aminopeptidase type 1 subfamily. Monomer. Requires Co(2+) as cofactor. It depends on Zn(2+) as a cofactor. Mn(2+) serves as cofactor. Fe(2+) is required as a cofactor.

The enzyme catalyses Release of N-terminal amino acids, preferentially methionine, from peptides and arylamides.. Functionally, removes the N-terminal methionine from nascent proteins. The N-terminal methionine is often cleaved when the second residue in the primary sequence is small and uncharged (Met-Ala-, Cys, Gly, Pro, Ser, Thr, or Val). Requires deformylation of the N(alpha)-formylated initiator methionine before it can be hydrolyzed. This is Methionine aminopeptidase from Salmonella typhi.